The primary structure comprises 283 residues: Putative cuticle collagen 79 (283 aa).

A disordered region spans residues 59-283; that stretch reads FKQQSSPPSP…ARSISKVAIQ (225 aa). 3 triple-helical region regions span residues 94 to 122, 139 to 201, and 204 to 269; these read GPPG…ENGG, GPRG…PGRK, and GEAG…DGAY. A compositionally biased stretch (pro residues) spans 137 to 146; that stretch reads PPGPRGPPGP. Acidic residues predominate over residues 226–240; it reads TDGDDGVDGQPGDEG. The segment covering 253-265 has biased composition (low complexity); the sequence is PQGEQGTEGQPGT.

The protein belongs to the cuticular collagen family. As to quaternary structure, collagen polypeptide chains are complexed within the cuticle by disulfide bonds and other types of covalent cross-links.

Its function is as follows. Nematode cuticles are composed largely of collagen-like proteins. The cuticle functions both as an exoskeleton and as a barrier to protect the worm from its environment. In Caenorhabditis elegans, this protein is Putative cuticle collagen 79 (col-79).